The chain runs to 427 residues: Gamma-glutamyl phosphate reductase (427 aa).

This sequence belongs to the gamma-glutamyl phosphate reductase family.

The protein resides in the cytoplasm. It catalyses the reaction L-glutamate 5-semialdehyde + phosphate + NADP(+) = L-glutamyl 5-phosphate + NADPH + H(+). It participates in amino-acid biosynthesis; L-proline biosynthesis; L-glutamate 5-semialdehyde from L-glutamate: step 2/2. Functionally, catalyzes the NADPH-dependent reduction of L-glutamate 5-phosphate into L-glutamate 5-semialdehyde and phosphate. The product spontaneously undergoes cyclization to form 1-pyrroline-5-carboxylate. The protein is Gamma-glutamyl phosphate reductase of Streptomyces griseus subsp. griseus (strain JCM 4626 / CBS 651.72 / NBRC 13350 / KCC S-0626 / ISP 5235).